A 397-amino-acid polypeptide reads, in one-letter code: Plasma membrane iron permease (397 aa).

4 helical membrane-spanning segments follow: residues 61 to 81, 92 to 112, 177 to 197, and 292 to 312; these read FTALFICLAIGGGFIGAFYAL, IWEGVFSLIAVVLITVMGFAM, AFPLPVICGLIVGCLIGYFIY, and GSILSYIIYWLFVAFIMFLMW. Phosphoserine is present on residues serine 337 and serine 338. A compositionally biased stretch (polar residues) spans 337-346; sequence SSHTPVQSSS. The tract at residues 337 to 364 is disordered; it reads SSHTPVQSSSSEDEFKINSPTDDKGDKA. Threonine 340 is subject to Phosphothreonine. A phosphoserine mark is found at serine 346, serine 347, and serine 355. The span at 349 to 364 shows a compositional bias: basic and acidic residues; it reads DEFKINSPTDDKGDKA. Threonine 357 is modified (phosphothreonine). Phosphoserine is present on residues serine 374, serine 375, and serine 376.

The protein belongs to the oxidase-dependent Fe transporter (OFeT) (TC 9.A.10.1) family.

It is found in the membrane. Functionally, permease for high affinity iron uptake. This chain is Plasma membrane iron permease (fip1), found in Schizosaccharomyces pombe (strain 972 / ATCC 24843) (Fission yeast).